The following is a 390-amino-acid chain: NADH-quinone oxidoreductase subunit D (390 aa).

This sequence belongs to the complex I 49 kDa subunit family. In terms of assembly, NDH-1 is composed of 14 different subunits. Subunits NuoB, C, D, E, F, and G constitute the peripheral sector of the complex.

The protein resides in the cell membrane. It catalyses the reaction a quinone + NADH + 5 H(+)(in) = a quinol + NAD(+) + 4 H(+)(out). In terms of biological role, NDH-1 shuttles electrons from NADH, via FMN and iron-sulfur (Fe-S) centers, to quinones in the respiratory chain. The immediate electron acceptor for the enzyme in this species is believed to be ubiquinone. Couples the redox reaction to proton translocation (for every two electrons transferred, four hydrogen ions are translocated across the cytoplasmic membrane), and thus conserves the redox energy in a proton gradient. The sequence is that of NADH-quinone oxidoreductase subunit D from Wolbachia pipientis subsp. Culex pipiens (strain wPip).